Reading from the N-terminus, the 162-residue chain is Peptide deformylase (162 aa).

Fe cation-binding residues include Cys91 and His133. Glu134 is a catalytic residue. His137 lines the Fe cation pocket.

This sequence belongs to the polypeptide deformylase family. It depends on Fe(2+) as a cofactor.

It carries out the reaction N-terminal N-formyl-L-methionyl-[peptide] + H2O = N-terminal L-methionyl-[peptide] + formate. In terms of biological role, removes the formyl group from the N-terminal Met of newly synthesized proteins. Requires at least a dipeptide for an efficient rate of reaction. N-terminal L-methionine is a prerequisite for activity but the enzyme has broad specificity at other positions. This chain is Peptide deformylase, found in Finegoldia magna (strain ATCC 29328 / DSM 20472 / WAL 2508) (Peptostreptococcus magnus).